The following is a 242-amino-acid chain: 1-(5-phosphoribosyl)-5-[(5-phosphoribosylamino)methylideneamino] imidazole-4-carboxamide isomerase (242 aa).

The active-site Proton acceptor is the D8. Catalysis depends on D129, which acts as the Proton donor.

This sequence belongs to the HisA/HisF family.

It localises to the cytoplasm. The enzyme catalyses 1-(5-phospho-beta-D-ribosyl)-5-[(5-phospho-beta-D-ribosylamino)methylideneamino]imidazole-4-carboxamide = 5-[(5-phospho-1-deoxy-D-ribulos-1-ylimino)methylamino]-1-(5-phospho-beta-D-ribosyl)imidazole-4-carboxamide. The protein operates within amino-acid biosynthesis; L-histidine biosynthesis; L-histidine from 5-phospho-alpha-D-ribose 1-diphosphate: step 4/9. This is 1-(5-phosphoribosyl)-5-[(5-phosphoribosylamino)methylideneamino] imidazole-4-carboxamide isomerase from Clostridium botulinum (strain ATCC 19397 / Type A).